We begin with the raw amino-acid sequence, 318 residues long: MVFHLKPFDVDNIHEHIFDRYTLLESLADGLSQDLGIHQRDEIVQVDIEPPITTKVKGKRKASKGLQPYNFTIRQSIAGLNSSSNANSTTGYVLWSTTPTFARWLLYDGNALPLREEDTDTSIPAIFSGSKSTAVVELGSGISGILPIVLGDQVDHYVCTDQKGILSKLKYNIEENLLQFNRRRCISEFLQIEPPSNEDQQRRNTRLEIMELDWEKFNGPTAQTHLTRISEECSTVHIVAMDVIYNDFLIDPFLKTLNHLRNYYLNEGLITHCIVGIHLRAQDVVEAFLERAILEYNLPICSVEDPFLEKTRVSLYYI.

Residues Trp-95, 139 to 141 (GSG), Asp-161, Trp-214, and Met-241 each bind S-adenosyl-L-methionine.

It belongs to the class I-like SAM-binding methyltransferase superfamily. RKM5 family.

Functionally, S-adenosyl-L-methionine-dependent protein-lysine N-methyltransferase that methylates 60S ribosomal protein L1. This is Ribosomal lysine N-methyltransferase 5 (RKM5) from Zygosaccharomyces rouxii (strain ATCC 2623 / CBS 732 / NBRC 1130 / NCYC 568 / NRRL Y-229).